The sequence spans 276 residues: Undecaprenyl-diphosphatase (276 aa).

A run of 6 helical transmembrane segments spans residues 43-63 (RAMA…VWEF), 85-105 (ANLL…ADLI), 109-129 (LFNP…MLWA), 183-203 (AATE…AVYS), 214-234 (SDLP…MIAV), and 249-269 (FAWY…FGWV).

Belongs to the UppP family.

It is found in the cell inner membrane. It carries out the reaction di-trans,octa-cis-undecaprenyl diphosphate + H2O = di-trans,octa-cis-undecaprenyl phosphate + phosphate + H(+). Its function is as follows. Catalyzes the dephosphorylation of undecaprenyl diphosphate (UPP). Confers resistance to bacitracin. This chain is Undecaprenyl-diphosphatase, found in Pseudomonas putida (strain W619).